A 2379-amino-acid polypeptide reads, in one-letter code: MESQIRYIDELIAGFNGSCKIERVNEGNCAAQSSNTEERKLIQAVQALLRILNDLNHNSADLIFQKCLGGLDRILHHNPYIMALSISSEDSGNLMIMDLIDKMLGLTERCSYNIHRMWYIRRNIIRWITSSTRLFGSDFKRIINLKIKKILNELETKCKLFLFTHQNVEPQEFISTLTLLHTILYWISADSNKLGDYFYWIQGSSSLNEWDLHFQKYIRIAMYLFTSFQIKIDANSSYFEKFNLLQANFIMLVANYQTSRTLSGGFNSIAISIQHLKFTLEVISEFMRNRSFLSKNETLITKSLLKIYYLSVCKASSNKNDILSIFLDYIPVVECINSKHQFNENYDSELERSLLLLYFDMKRRYADPDELQFIDSFDIWSHPDCIDEVSIITQPIKKNSKQIEKLQRSILKSYTVNIKQIHSFLFKELNSLEPGILDRNGDHYKAVVKEISISIKRSLKIRDSKKIITWLRVLSRMACIEDKLINTKQNISEFFHTTNDFCNYCDSIHDGNFLNNIEPSRPLAQDQSEIFSMINKYFILNPDLKKFSMSIKCGLFIVIERIFAHFQPTALMNENNQIAPLFSFIEDSFIDSDRHVRLLICKILPLWNTSNHNNSEDEMSMHLIQFLQKVNSPLLLETVVLSWSKITLTTHGDVFDTLLLKLIDLFNSNNFTLHIMMKEQLIRMSSLLNKTPYQLLSPVLPIILRQLSKNLNEKKLSFQRLCDLVGYTGKVILDIFQKYVIPYATVQYKSDVFSEVAKIMCDDDTSMLLQQKHNLLTKNSRQIFAVALVKHGFFSLDTMETLFLNRVPSYDRRYIGAYLPDYKTLAEVTKLYKNNEITDSSDIENENMVLCSLRYLITNFESDKRHGTEYKDINKWSDKKENQFQNNLQDNILGIFQVFSSDMHDVEGKTTYYEKLRVINGISFLVKHASNKCIISALAQLSICLQSGLEIPEVRYLSMRCWFLLIQRLNEEELTTVIDAPVAFILRKWPTFNKKLQLKALEVLTALIRTKNSLLMKMKPYISISLLSNESIPILDIDTNFSRQAARLRNTIDLVPIFVKNLQSNNKFVIEQNLDDIKFHLKRRQGELLQYDKYGNLQLNAVPSLIGALLEVAHKYRTIDHEICKKCAKCISMVGVPDIRRIDLRGDRKEKWKVFDFNDYSKTTEFLIWLIDDILVPSFWQSENPNKQLFFALVMQESLKYCGLSSQSWDINEPDKFPEQLELWNKFNSISKTTLYPLLSSLYLAQSWKEYVPIKYPSLNFRDGYKTWIKNFTLDLLKTGTTEDHPLHVFSSLIREDDGSLSSFLLPYIAQDIIIKAQSGTEYESLMDNILIELQSVVTYEIDGLNHLQRDSLKMCYEAVFSILEYCKKWATMFRQDYNNANGTFLIKEDKYLKMLKRIDYFINSIPLDLLANKSLETNAFERSALYLEECYRHSDIHDRNLNSTLKSLQMTYEEIGDIDSIDGLLKSFASTSFETKIEELQYSNKWQMALECFDILADITKHDSTAQIMTKSMFDHHLYKNVIQTVPKLVPDNIQKLNESNTNLLIRALESSILEGDLKSIEKWSSKIELMTTINDPELTLQYNLGKALLSISKGNHIKAGQFLDNCYQITGIQYTSTSNSTTLLKTQSLLTKLHGLHDLNMLNFSKDDFELQSNMQLLDLRRGKVGPDFDPNYYILSIRKTFDKIHKNPITKTDLVDTYFAIAQEARVNSRLDIASKALIFCLEKGHPYSELEFAEILWKDGENDRALKLVREINQKNEKSSSVSVRNKAEVLLKYTEWLDISNNSASEQIITQYKNIFALEPEWEQPYYSIGLYFSRLLERRKAEGYVSDGKLEFKSISYFLLAFEKNTVKVRENLPKVITFWLDTAAAVITETSPNRNTILKKVTTDICKQIETAIRNCPTYIWYSVLTQLLSRLLHPHLSSAKLIMHILLSLAVEYPSHILWHISVLCQSNSSKRVKCGQDILEKFRAHSDNQEDIINSSIYLTSSLTRICLQEVKSSSSRSGRSLVSDFKFDVNIAPTPMTVPVRKNLEMISPLSAETMKSYQPFRPTVSIAKFASSYKIFSSLKKPKKITIIGSDGMLYEIMCKKEDVRQDNQYMQFAATMDFLLSKDLDSSKRDLGITVYSVLSLREDCGLLEIVPDVVTLRSIFTTKYESKKIKYSMKALYEKWQGLADELKPVFFNEQTKKFSPVLHEWFLENFPDPINWYRARNLYSRSYAVMAMVGYILGLGDRHCENILLDIKTGKVLHVDFDCLFEKGENLPVPEIVPFRLTQNLQDALGILGTEGTFKKSSEVTLSLMRQNEVALMNIIETIMYDRNMDHSIQKALRKLRNKIRGIDPRDGLLLSVSGQAETLIQEATSTENLSKMYIGWLPFW.

Residues 1410–1955 (LLANKSLETN…LWHISVLCQS (546 aa)) enclose the FAT domain. Residues 2060-2363 (FASSYKIFSS…QAETLIQEAT (304 aa)) form the PI3K/PI4K catalytic domain. The tract at residues 2066-2072 (IFSSLKK) is G-loop. Residues 2232-2240 (GLGDRHCEN) are catalytic loop. Residues 2252–2276 (HVDFDCLFEKGENLPVPEIVPFRLT) form an activation loop region. The region spanning 2347 to 2379 (LLLSVSGQAETLIQEATSTENLSKMYIGWLPFW) is the FATC domain.

The protein belongs to the PI3/PI4-kinase family. ATM subfamily.

Its subcellular location is the nucleus. It catalyses the reaction L-seryl-[protein] + ATP = O-phospho-L-seryl-[protein] + ADP + H(+). The catalysed reaction is L-threonyl-[protein] + ATP = O-phospho-L-threonyl-[protein] + ADP + H(+). In terms of biological role, serine/threonine protein kinase which activates checkpoint signaling upon genotoxic stresses such as ionizing radiation (IR), ultraviolet light (UV), or DNA replication stalling, thereby acting as a DNA damage sensor. Recognizes the substrate consensus sequence [ST]-Q. Recruited to DNA lesions in order to initiate the DNA repair by homologous recombination. Phosphorylates histone H2A to form H2AS128ph (gamma-H2A) at sites of DNA damage, also involved in the regulation of DNA damage response mechanism. Required for cell growth and meiotic recombination. The sequence is that of Serine/threonine-protein kinase MEC1 (MEC1) from Candida glabrata (strain ATCC 2001 / BCRC 20586 / JCM 3761 / NBRC 0622 / NRRL Y-65 / CBS 138) (Yeast).